We begin with the raw amino-acid sequence, 348 residues long: 3',5'-cyclic-nucleotide phosphodiesterase (348 aa).

Requires Mn(2+) as cofactor.

It catalyses the reaction a nucleoside 3',5'-cyclic phosphate + H2O = a nucleoside 5'-phosphate + H(+). Hydrolyzes cAMP to 5'-AMP and cGMP to 5'-GMP. Does not show phosphohydrolase activity toward various phosphatidylcholine and phosphorylated sugars. The chain is 3',5'-cyclic-nucleotide phosphodiesterase from Helicobacter pylori (strain ATCC 700392 / 26695) (Campylobacter pylori).